Reading from the N-terminus, the 105-residue chain is UPF0060 membrane protein Ajs_1326 (105 aa).

4 helical membrane passes run Phe-4 to Trp-24, Ser-30 to Leu-50, Ala-60 to Ile-80, and Pro-82 to Phe-102.

The protein belongs to the UPF0060 family.

The protein resides in the cell inner membrane. This is UPF0060 membrane protein Ajs_1326 from Acidovorax sp. (strain JS42).